Here is a 263-residue protein sequence, read N- to C-terminus: Endonuclease 8 (263 aa).

P2 functions as the Schiff-base intermediate with DNA in the catalytic mechanism. Catalysis depends on E3, which acts as the Proton donor. Catalysis depends on K53, which acts as the Proton donor; for beta-elimination activity. The DNA site is built by Q70, R125, and N169. An FPG-type zinc finger spans residues 229-263 (KVFHRDGEPCERCGSIIEKTTLSSRPFYWCPGCQH). The Proton donor; for delta-elimination activity role is filled by R253.

It belongs to the FPG family. Requires Zn(2+) as cofactor.

The catalysed reaction is 2'-deoxyribonucleotide-(2'-deoxyribose 5'-phosphate)-2'-deoxyribonucleotide-DNA = a 3'-end 2'-deoxyribonucleotide-(2,3-dehydro-2,3-deoxyribose 5'-phosphate)-DNA + a 5'-end 5'-phospho-2'-deoxyribonucleoside-DNA + H(+). Its function is as follows. Involved in base excision repair of DNA damaged by oxidation or by mutagenic agents. Acts as a DNA glycosylase that recognizes and removes damaged bases. Has a preference for oxidized pyrimidines, such as thymine glycol, 5,6-dihydrouracil and 5,6-dihydrothymine. Has AP (apurinic/apyrimidinic) lyase activity and introduces nicks in the DNA strand. Cleaves the DNA backbone by beta-delta elimination to generate a single-strand break at the site of the removed base with both 3'- and 5'-phosphates. The protein is Endonuclease 8 of Shigella sonnei (strain Ss046).